The following is a 145-amino-acid chain: Superoxide dismutase [Mn/Fe] (145 aa).

Fe(3+) contacts are provided by H10 and H64. H10 and H64 together coordinate Mn(2+).

It belongs to the iron/manganese superoxide dismutase family. Mn(2+) serves as cofactor. It depends on Fe(3+) as a cofactor.

It carries out the reaction 2 superoxide + 2 H(+) = H2O2 + O2. Functionally, destroys superoxide anion radicals which are normally produced within the cells and which are toxic to biological systems. Catalyzes the dismutation of superoxide anion radicals into O2 and H2O2 by successive reduction and oxidation of the transition metal ion at the active site. The sequence is that of Superoxide dismutase [Mn/Fe] (sodA) from Streptococcus parasanguinis.